The sequence spans 344 residues: Dihydroorotate dehydrogenase (quinone) (344 aa).

FMN-binding positions include 62–66 (AGLDK) and Thr86. Residue Lys66 coordinates substrate. A substrate-binding site is contributed by 111 to 115 (NRMGF). Residues Asn139 and Asn172 each coordinate FMN. Asn172 lines the substrate pocket. Ser175 serves as the catalytic Nucleophile. Asn177 contributes to the substrate binding site. Residues Lys217 and Thr245 each coordinate FMN. 246 to 247 (NT) is a substrate binding site. Residues Gly268, Gly297, and 318–319 (YS) contribute to the FMN site.

Belongs to the dihydroorotate dehydrogenase family. Type 2 subfamily. Monomer. The cofactor is FMN.

It is found in the cell membrane. The catalysed reaction is (S)-dihydroorotate + a quinone = orotate + a quinol. It functions in the pathway pyrimidine metabolism; UMP biosynthesis via de novo pathway; orotate from (S)-dihydroorotate (quinone route): step 1/1. Functionally, catalyzes the conversion of dihydroorotate to orotate with quinone as electron acceptor. In Chromobacterium violaceum (strain ATCC 12472 / DSM 30191 / JCM 1249 / CCUG 213 / NBRC 12614 / NCIMB 9131 / NCTC 9757 / MK), this protein is Dihydroorotate dehydrogenase (quinone).